The following is a 439-amino-acid chain: Dolichyl-diphosphooligosaccharide--protein glycosyltransferase 48 kDa subunit (439 aa).

The first 26 residues, Met-1–Ser-26, serve as a signal peptide directing secretion. The Lumenal portion of the chain corresponds to Gly-27–Tyr-409. Residues Pro-410–Leu-430 traverse the membrane as a helical segment. Residues His-431 to Asp-439 lie on the Cytoplasmic side of the membrane.

The protein belongs to the DDOST 48 kDa subunit family. Component of the oligosaccharyltransferase (OST) complex. OST exists in two different complex forms which contain common core subunits RPN1, RPN2, OST48, OST4, DAD1 and TMEM258, either STT3A or STT3B as catalytic subunits, and form-specific accessory subunits. STT3A complex assembly occurs through the formation of 3 subcomplexes. Subcomplex 1 contains RPN1 and TMEM258, subcomplex 2 contains the STT3A-specific subunits STT3A, DC2/OSTC, and KCP2 as well as the core subunit OST4, and subcomplex 3 contains RPN2, DAD1, and OST48. The STT3A complex can form stable complexes with the Sec61 complex or with both the Sec61 and TRAP complexes. Interacts with SMIM22.

Its subcellular location is the endoplasmic reticulum membrane. Its pathway is protein modification; protein glycosylation. Functionally, subunit of the oligosaccharyl transferase (OST) complex that catalyzes the initial transfer of a defined glycan (Glc(3)Man(9)GlcNAc(2) in eukaryotes) from the lipid carrier dolichol-pyrophosphate to an asparagine residue within an Asn-X-Ser/Thr consensus motif in nascent polypeptide chains, the first step in protein N-glycosylation. N-glycosylation occurs cotranslationally and the complex associates with the Sec61 complex at the channel-forming translocon complex that mediates protein translocation across the endoplasmic reticulum (ER). All subunits are required for a maximal enzyme activity. Required for the assembly of both SST3A- and SS3B-containing OST complexes. The chain is Dolichyl-diphosphooligosaccharide--protein glycosyltransferase 48 kDa subunit from Bos taurus (Bovine).